The sequence spans 202 residues: dTTP/UTP pyrophosphatase (202 aa).

The Proton acceptor role is filled by Asp71.

It belongs to the Maf family. YhdE subfamily. The cofactor is a divalent metal cation.

The protein resides in the cytoplasm. It carries out the reaction dTTP + H2O = dTMP + diphosphate + H(+). The enzyme catalyses UTP + H2O = UMP + diphosphate + H(+). Nucleoside triphosphate pyrophosphatase that hydrolyzes dTTP and UTP. May have a dual role in cell division arrest and in preventing the incorporation of modified nucleotides into cellular nucleic acids. This chain is dTTP/UTP pyrophosphatase, found in Zymomonas mobilis subsp. mobilis (strain ATCC 31821 / ZM4 / CP4).